Here is a 200-residue protein sequence, read N- to C-terminus: HTH-type transcriptional regulator Hpr (200 aa).

An HTH marR-type domain is found at 13-157 (AMLFSQRIAQ…MMCIVRNIYG (145 aa)). Residues 63–86 (ISEIAKFGVMHVSTAFNFSKKLEE) constitute a DNA-binding region (H-T-H motif).

As to quaternary structure, homodimer.

Its function is as follows. Negative regulator of protease production and sporulation. In Geobacillus thermodenitrificans (strain NG80-2), this protein is HTH-type transcriptional regulator Hpr.